Here is a 344-residue protein sequence, read N- to C-terminus: Dihydroorotate dehydrogenase (quinone) (344 aa).

Residues 61–65 (AGLDK) and T85 each bind FMN. K65 is a binding site for substrate. 110 to 114 (NRMGF) serves as a coordination point for substrate. N138 and N171 together coordinate FMN. Residue N171 participates in substrate binding. The Nucleophile role is filled by S174. N176 lines the substrate pocket. K216 and T244 together coordinate FMN. 245–246 (NT) is a binding site for substrate. FMN contacts are provided by residues G267, G296, and 317-318 (YS).

It belongs to the dihydroorotate dehydrogenase family. Type 2 subfamily. In terms of assembly, monomer. Requires FMN as cofactor.

It is found in the cell membrane. The catalysed reaction is (S)-dihydroorotate + a quinone = orotate + a quinol. It functions in the pathway pyrimidine metabolism; UMP biosynthesis via de novo pathway; orotate from (S)-dihydroorotate (quinone route): step 1/1. In terms of biological role, catalyzes the conversion of dihydroorotate to orotate with quinone as electron acceptor. The chain is Dihydroorotate dehydrogenase (quinone) from Psychrobacter cryohalolentis (strain ATCC BAA-1226 / DSM 17306 / VKM B-2378 / K5).